Reading from the N-terminus, the 362-residue chain is tRNA-specific 2-thiouridylase MnmA 3 (362 aa).

Residues 11–18 (GMSGGIDS) and Met37 contribute to the ATP site. Residue Cys91 is the Nucleophile of the active site. A disulfide bridge links Cys91 with Cys188. Gly115 contacts ATP. The tract at residues 137–139 (KDQ) is interaction with tRNA. Cys188 serves as the catalytic Cysteine persulfide intermediate. The interval 296-297 (RY) is interaction with tRNA.

It belongs to the MnmA/TRMU family.

The protein localises to the cytoplasm. The enzyme catalyses S-sulfanyl-L-cysteinyl-[protein] + uridine(34) in tRNA + AH2 + ATP = 2-thiouridine(34) in tRNA + L-cysteinyl-[protein] + A + AMP + diphosphate + H(+). Its function is as follows. Catalyzes the 2-thiolation of uridine at the wobble position (U34) of tRNA, leading to the formation of s(2)U34. This is tRNA-specific 2-thiouridylase MnmA 3 from Bacteroides fragilis (strain YCH46).